The primary structure comprises 169 residues: Succinate dehydrogenase cytochrome b560 subunit, mitochondrial (169 aa).

The N-terminal 29 residues, 1-29 (MAALLLRHVGRHCLRAHLSPQLCIRNAVP), are a transit peptide targeting the mitochondrion. The Mitochondrial matrix portion of the chain corresponds to 30–62 (LGTTAKEEMERFWNKNLGSNRPLSPHITIYRWS). The helical transmembrane segment at 63-92 (LPMAMSICHRGTGIALSAGVSLFGLSALLL) threads the bilayer. The Mitochondrial intermembrane segment spans residues 93 to 112 (PGNFESHLELVKSLCLGPTL). The chain crosses the membrane as a helical span at residues 113-137 (IYTAKFGIVFPLMYHTWNGIRHLIW). H127 lines the heme b pocket. Over 138–144 (DLGKGLT) the chain is Mitochondrial matrix. A helical transmembrane segment spans residues 145–166 (IPQLTQSGVVVLILTVLSSVGL). At 167–169 (AAM) the chain is on the mitochondrial intermembrane side.

This sequence belongs to the cytochrome b560 family. In terms of assembly, component of complex II composed of four subunits: the flavoprotein (FP) SDHA, iron-sulfur protein (IP) SDHB, and a cytochrome b560 composed of SDHC and SDHD. Heme b is required as a cofactor. As to expression, detected in heart muscle (at protein level).

The protein localises to the mitochondrion inner membrane. Its pathway is carbohydrate metabolism; tricarboxylic acid cycle. Functionally, membrane-anchoring subunit of succinate dehydrogenase (SDH) that is involved in complex II of the mitochondrial electron transport chain and is responsible for transferring electrons from succinate to ubiquinone (coenzyme Q). SDH also oxidizes malate to the non-canonical enol form of oxaloacetate, enol-oxaloacetate. Enol-oxaloacetate, which is a potent inhibitor of the succinate dehydrogenase activity, is further isomerized into keto-oxaloacetate. In Sus scrofa (Pig), this protein is Succinate dehydrogenase cytochrome b560 subunit, mitochondrial (SDHC).